Here is a 158-residue protein sequence, read N- to C-terminus: MGQFTVVSLGLLAMFLSLSGAKGDNCPASWISRNGVCNKLFPDRKTWLEAEMYCRALKPGCHLASLHRDSDSTVLAWYISDHFKGAGHVWIGLRDTNRKRTWKWSDRTSTNYFSWNQGEPNNVQDNENCVHLWAPSGYLKWNDEPCASLHPFICQYKL.

The signal sequence occupies residues 1 to 23 (MGQFTVVSLGLLAMFLSLSGAKG). 3 disulfides stabilise this stretch: C26–C37, C54–C154, and C129–C146. The C-type lectin domain occupies 33-155 (RNGVCNKLFP…CASLHPFICQ (123 aa)). Residues 119 to 121 (EPN) carry the Mannose-binding motif. E127, N142, and D143 together coordinate Ca(2+).

Belongs to the true venom lectin family. Expressed by the venom gland.

The protein resides in the secreted. Its function is as follows. Mannose-binding lectin which recognizes specific carbohydrate structures and agglutinates a variety of animal cells by binding to cell-surface glycoproteins and glycolipids. May be a calcium-dependent lectin. In Pseudoferania polylepis (Macleay's water snake), this protein is C-type lection lectoxin-Enh3.